A 732-amino-acid chain; its full sequence is Phosphoribosylformylglycinamidine synthase subunit PurL (732 aa).

The active site involves histidine 42. Tyrosine 45 and lysine 84 together coordinate ATP. A Mg(2+)-binding site is contributed by glutamate 86. Residues 87 to 90 and arginine 109 contribute to the substrate site; that span reads SHNH. The active-site Proton acceptor is the histidine 88. Aspartate 110 contacts Mg(2+). Glutamine 238 serves as a coordination point for substrate. Aspartate 266 provides a ligand contact to Mg(2+). 310 to 312 provides a ligand contact to substrate; the sequence is ESQ. 2 residues coordinate ATP: aspartate 496 and glycine 533. Position 534 (asparagine 534) interacts with Mg(2+). Substrate is bound at residue serine 536.

This sequence belongs to the FGAMS family. As to quaternary structure, monomer. Part of the FGAM synthase complex composed of 1 PurL, 1 PurQ and 2 PurS subunits.

The protein localises to the cytoplasm. It catalyses the reaction N(2)-formyl-N(1)-(5-phospho-beta-D-ribosyl)glycinamide + L-glutamine + ATP + H2O = 2-formamido-N(1)-(5-O-phospho-beta-D-ribosyl)acetamidine + L-glutamate + ADP + phosphate + H(+). It functions in the pathway purine metabolism; IMP biosynthesis via de novo pathway; 5-amino-1-(5-phospho-D-ribosyl)imidazole from N(2)-formyl-N(1)-(5-phospho-D-ribosyl)glycinamide: step 1/2. In terms of biological role, part of the phosphoribosylformylglycinamidine synthase complex involved in the purines biosynthetic pathway. Catalyzes the ATP-dependent conversion of formylglycinamide ribonucleotide (FGAR) and glutamine to yield formylglycinamidine ribonucleotide (FGAM) and glutamate. The FGAM synthase complex is composed of three subunits. PurQ produces an ammonia molecule by converting glutamine to glutamate. PurL transfers the ammonia molecule to FGAR to form FGAM in an ATP-dependent manner. PurS interacts with PurQ and PurL and is thought to assist in the transfer of the ammonia molecule from PurQ to PurL. The chain is Phosphoribosylformylglycinamidine synthase subunit PurL from Campylobacter hominis (strain ATCC BAA-381 / DSM 21671 / CCUG 45161 / LMG 19568 / NCTC 13146 / CH001A).